A 504-amino-acid polypeptide reads, in one-letter code: Glycerol kinase (504 aa).

Position 12 (threonine 12) interacts with ADP. ATP-binding residues include threonine 12, threonine 13, and serine 14. A sn-glycerol 3-phosphate-binding site is contributed by threonine 12. Arginine 16 is an ADP binding site. Residues arginine 82, glutamate 83, tyrosine 134, and aspartate 246 each coordinate sn-glycerol 3-phosphate. Positions 82, 83, 134, 246, and 247 each coordinate glycerol. Residues threonine 268 and glycine 312 each contribute to the ADP site. 4 residues coordinate ATP: threonine 268, glycine 312, glutamine 316, and glycine 413. ADP-binding residues include glycine 413 and asparagine 417.

Belongs to the FGGY kinase family.

The enzyme catalyses glycerol + ATP = sn-glycerol 3-phosphate + ADP + H(+). It functions in the pathway polyol metabolism; glycerol degradation via glycerol kinase pathway; sn-glycerol 3-phosphate from glycerol: step 1/1. With respect to regulation, inhibited by fructose 1,6-bisphosphate (FBP). In terms of biological role, key enzyme in the regulation of glycerol uptake and metabolism. Catalyzes the phosphorylation of glycerol to yield sn-glycerol 3-phosphate. The sequence is that of Glycerol kinase from Renibacterium salmoninarum (strain ATCC 33209 / DSM 20767 / JCM 11484 / NBRC 15589 / NCIMB 2235).